We begin with the raw amino-acid sequence, 191 residues long: Fe/S biogenesis protein NfuA (191 aa).

[4Fe-4S] cluster-binding residues include Cys-149 and Cys-152.

This sequence belongs to the NfuA family. As to quaternary structure, homodimer. Requires [4Fe-4S] cluster as cofactor.

Functionally, involved in iron-sulfur cluster biogenesis. Binds a 4Fe-4S cluster, can transfer this cluster to apoproteins, and thereby intervenes in the maturation of Fe/S proteins. Could also act as a scaffold/chaperone for damaged Fe/S proteins. The protein is Fe/S biogenesis protein NfuA of Escherichia coli O7:K1 (strain IAI39 / ExPEC).